We begin with the raw amino-acid sequence, 407 residues long: MAKITGIECIRTRKNGTWTIVKVMTDQDGLYGLGSASDVYNPEAVVQIIEQLLAPLLIGKDAANIEDLWQTMYMSGYWRNGALLHTAIGGIDMALWDIKGKEAGLPVYQLLGGACRAAVPCYGHAGGKDIAELKEDVHRFIEEGYTVIRVQMGGYGGGGFIDRDKANIPQQAWGSGPVFDEQSYLHAIPHMFEQLRNEFGMGVQFTHDVHEHLTPVNAIQLAKRVEPYSLFFLEDAIAPEQIGWYRHLRQQSATPQAVGELFVNPQEWTQLIKEQLIDFIRVRVSKAGGISACRKIAALAEAFGVRTAWQEGGENDPVNQAAAVHLDMAIWNFGIQEVNHFKPEEKDAFEGHIERKGGYLYPSQKPGLGIELDELKAQQLLGEGWSKSVYFNPYQLDRKADGTLVRP.

Residue aspartate 208 participates in Mg(2+) binding. Histidine 210 is a D-arabinonate binding site. Residues glutamate 234 and glutamate 260 each contribute to the Mg(2+) site. Residues glutamate 260, arginine 281, and glutamate 337 each contribute to the D-arabinonate site.

The protein belongs to the mandelate racemase/muconate lactonizing enzyme family. GalD subfamily.

Functionally, has no detectable activity with D-mannonate and with a panel of 70 other acid sugars (in vitro), in spite of the conservation of the residues that are expected to be important for catalytic activity and cofactor binding. May have evolved a divergent function. In Paenibacillus sp. (strain JDR-2), this protein is D-galactonate dehydratase family member Pjdr2_1176.